The sequence spans 161 residues: Large ribosomal subunit protein uL11 (161 aa).

Belongs to the universal ribosomal protein uL11 family. In terms of assembly, part of the ribosomal stalk of the 50S ribosomal subunit. Interacts with L10 and the large rRNA to form the base of the stalk. L10 forms an elongated spine to which L12 dimers bind in a sequential fashion forming a multimeric L10(L12)X complex.

In terms of biological role, forms part of the ribosomal stalk which helps the ribosome interact with GTP-bound translation factors. In Methanosarcina mazei (strain ATCC BAA-159 / DSM 3647 / Goe1 / Go1 / JCM 11833 / OCM 88) (Methanosarcina frisia), this protein is Large ribosomal subunit protein uL11.